Here is a 325-residue protein sequence, read N- to C-terminus: NADH-quinone oxidoreductase subunit H (325 aa).

The next 8 membrane-spanning stretches (helical) occupy residues 8-28 (VIDI…VVTC), 81-101 (GIFT…FAIV), 114-134 (IGVL…LFAG), 159-179 (FLGL…LGAI), 186-206 (LWNV…GVAV), 237-257 (FFVG…TLFF), 265-285 (LPPF…FILI), and 304-324 (ICLP…LYNA).

The protein belongs to the complex I subunit 1 family. In terms of assembly, NDH-1 is composed of 13 different subunits. Subunits NuoA, H, J, K, L, M, N constitute the membrane sector of the complex.

The protein resides in the cell inner membrane. The enzyme catalyses a quinone + NADH + 5 H(+)(in) = a quinol + NAD(+) + 4 H(+)(out). In terms of biological role, NDH-1 shuttles electrons from NADH, via FMN and iron-sulfur (Fe-S) centers, to quinones in the respiratory chain. The immediate electron acceptor for the enzyme in this species is believed to be ubiquinone. Couples the redox reaction to proton translocation (for every two electrons transferred, four hydrogen ions are translocated across the cytoplasmic membrane), and thus conserves the redox energy in a proton gradient. This subunit may bind ubiquinone. This Sodalis glossinidius (strain morsitans) protein is NADH-quinone oxidoreductase subunit H.